The chain runs to 384 residues: MSAAVAPTCKATMYVCGITPYDATHLGHAATYLAFDLIHRLWLDLGHEVHYVQNVTDVDDPLFERADRNGVDWRDLAEREVALFRDDMASLRILPPHDYVAATETIVEIVELVDKMLVSGAAYVIDDEYPDIYFRADATLQFGYESGYDRDTMLRLYEQSGGDPRRPGKNGELDALLWRAARPGEPSWSSPFGPGRPGWHVECAAIALSRIGIGLDIQGGGSDLIFPHHEFTAAHAECVRGERRFARHYVHAGMIGWDEHKMSKSRGNLVLVSTLRAQGAPPSAIRLGLLAGHYRADRFWSSQLLDDAIARLHRWRTAASMPAGPDVADVIARVRGYLADDLDTPKAIAALDGWVTDALEYGGHDAAAPKLLATAIDALLGVDL.

Residue Cys-16 coordinates Zn(2+). L-cysteinyl-5'-AMP is bound by residues 16 to 19 (CGIT), Thr-31, and 54 to 56 (NVT). The 'HIGH' region motif lies at 18–28 (ITPYDATHLGH). The short motif at 159 to 164 (QSGGDP) is the 'ERGGDP' region element. An L-cysteinyl-5'-AMP-binding site is contributed by Trp-199. Cys-203 contacts Zn(2+). 221–223 (GSD) serves as a coordination point for L-cysteinyl-5'-AMP. His-228 is a Zn(2+) binding site. Ile-255 lines the L-cysteinyl-5'-AMP pocket. A 'KMSKS' region motif is present at residues 261–265 (KMSKS).

This sequence belongs to the class-I aminoacyl-tRNA synthetase family. MshC subfamily. Monomer. Zn(2+) is required as a cofactor.

It carries out the reaction 1D-myo-inositol 2-amino-2-deoxy-alpha-D-glucopyranoside + L-cysteine + ATP = 1D-myo-inositol 2-(L-cysteinylamino)-2-deoxy-alpha-D-glucopyranoside + AMP + diphosphate + H(+). Functionally, catalyzes the ATP-dependent condensation of GlcN-Ins and L-cysteine to form L-Cys-GlcN-Ins. The protein is L-cysteine:1D-myo-inositol 2-amino-2-deoxy-alpha-D-glucopyranoside ligase of Mycobacterium leprae (strain Br4923).